The chain runs to 714 residues: Hormonally up-regulated neu tumor-associated kinase (714 aa).

Residues 1–16 show a composition bias toward low complexity; sequence MPAAAGDGLLGEPAAP. Positions 1 to 28 are disordered; that stretch reads MPAAAGDGLLGEPAAPGGDGGAEDTTRP. The Protein kinase domain maps to 62–320; that stretch reads LIGSRKLGEG…IQQALANRWL (259 aa). ATP is bound by residues 68-76 and Lys91; that span reads LGEGSFAKV. Asp186 (proton acceptor) is an active-site residue. Residues 624–635 are compositionally biased toward basic and acidic residues; the sequence is HEEKNSPPKEEG. 2 disordered regions span residues 624 to 658 and 674 to 714; these read HEEK…NCVK and KRHQ…KGQC. Residues 692 to 703 are compositionally biased toward polar residues; it reads SPLQPTAPSSLS.

This sequence belongs to the protein kinase superfamily. CAMK Ser/Thr protein kinase family. SNF1 subfamily.

The catalysed reaction is L-seryl-[protein] + ATP = O-phospho-L-seryl-[protein] + ADP + H(+). The enzyme catalyses L-threonyl-[protein] + ATP = O-phospho-L-threonyl-[protein] + ADP + H(+). The protein is Hormonally up-regulated neu tumor-associated kinase (Hunk) of Mus musculus (Mouse).